The sequence spans 322 residues: SUMO-activating enzyme subunit 1A (322 aa).

N-acetylmethionine is present on Met1.

Belongs to the ubiquitin-activating E1 family. As to quaternary structure, heterodimer of SAE1A or SAE1B and SAE2. The complex binds SUMO proteins via SAE2.

The protein resides in the nucleus. It participates in protein modification; protein sumoylation. In terms of biological role, the dimeric enzyme acts as an E1 ligase for SUMO1 and SUMO2. It mediates ATP-dependent activation of SUMO proteins and formation of a thioester with a conserved cysteine residue on SAE2. Functionally redundant with its paralog SAE1B. This Arabidopsis thaliana (Mouse-ear cress) protein is SUMO-activating enzyme subunit 1A (SAE1A).